Consider the following 189-residue polypeptide: MLKTMIKNELEAHQKTFSEHVNLLGSLELACQMVADTLKNGKKVLICGNGGSAADAQHFAAELTGRYKSERQPLPGIALTTDTSALTAIGNDYGFDYVFSRQFEALAQSGDLLVAISTSGNSKNVLEAIKSAKKMGVSVLGLSGKGGGAMNEGCDLNLVVGSSDTARIQESHIFFIHTICQAVDEAFRG.

Positions 34 to 189 (VADTLKNGKK…CQAVDEAFRG (156 aa)) constitute an SIS domain. Position 49-51 (49-51 (NGG)) interacts with substrate. The Zn(2+) site is built by His58 and Glu62. Substrate contacts are provided by residues Glu62, 91-92 (ND), 117-119 (STS), Ser122, and Gln169. 2 residues coordinate Zn(2+): Gln169 and His177.

This sequence belongs to the SIS family. GmhA subfamily. In terms of assembly, homotetramer. The cofactor is Zn(2+).

The protein localises to the cytoplasm. The catalysed reaction is 2 D-sedoheptulose 7-phosphate = D-glycero-alpha-D-manno-heptose 7-phosphate + D-glycero-beta-D-manno-heptose 7-phosphate. It participates in carbohydrate biosynthesis; D-glycero-D-manno-heptose 7-phosphate biosynthesis; D-glycero-alpha-D-manno-heptose 7-phosphate and D-glycero-beta-D-manno-heptose 7-phosphate from sedoheptulose 7-phosphate: step 1/1. Catalyzes the isomerization of sedoheptulose 7-phosphate in D-glycero-D-manno-heptose 7-phosphate. The protein is Phosphoheptose isomerase of Campylobacter concisus (strain 13826).